The sequence spans 141 residues: Protein NrdI (141 aa).

This sequence belongs to the NrdI family.

Its function is as follows. Probably involved in ribonucleotide reductase function. This Bifidobacterium animalis subsp. lactis (strain AD011) protein is Protein NrdI.